The sequence spans 223 residues: Adenylate kinase (223 aa).

10-15 (GSGKGT) provides a ligand contact to ATP. Positions 30–59 (ESGAIFRQHIGGGTELGKKAKEYIDRGDLV) are NMP. AMP-binding positions include S31, R36, 57-59 (DLV), 84-87 (GFPR), and Q91. The LID stretch occupies residues 125–164 (GRRLCKNDNNHPNNIFIDAIKPDGDVCRVCGGSLSARADD). R126 lines the ATP pocket. Positions 161 and 173 each coordinate AMP. Residue G209 participates in ATP binding.

The protein belongs to the adenylate kinase family. As to quaternary structure, monomer.

The protein resides in the cytoplasm. It carries out the reaction AMP + ATP = 2 ADP. It functions in the pathway purine metabolism; AMP biosynthesis via salvage pathway; AMP from ADP: step 1/1. Catalyzes the reversible transfer of the terminal phosphate group between ATP and AMP. Plays an important role in cellular energy homeostasis and in adenine nucleotide metabolism. The chain is Adenylate kinase from Nitratidesulfovibrio vulgaris (strain DSM 19637 / Miyazaki F) (Desulfovibrio vulgaris).